A 627-amino-acid chain; its full sequence is 1-deoxy-D-xylulose-5-phosphate synthase (627 aa).

Thiamine diphosphate is bound by residues His-80 and 121–123; that span reads GHS. Asp-152 lines the Mg(2+) pocket. Residues 153–154, Asn-181, Tyr-288, and Glu-370 each bind thiamine diphosphate; that span reads GA. A Mg(2+)-binding site is contributed by Asn-181.

It belongs to the transketolase family. DXPS subfamily. As to quaternary structure, homodimer. Mg(2+) is required as a cofactor. It depends on thiamine diphosphate as a cofactor.

It carries out the reaction D-glyceraldehyde 3-phosphate + pyruvate + H(+) = 1-deoxy-D-xylulose 5-phosphate + CO2. The protein operates within metabolic intermediate biosynthesis; 1-deoxy-D-xylulose 5-phosphate biosynthesis; 1-deoxy-D-xylulose 5-phosphate from D-glyceraldehyde 3-phosphate and pyruvate: step 1/1. In terms of biological role, catalyzes the acyloin condensation reaction between C atoms 2 and 3 of pyruvate and glyceraldehyde 3-phosphate to yield 1-deoxy-D-xylulose-5-phosphate (DXP). This Vibrio atlanticus (strain LGP32) (Vibrio splendidus (strain Mel32)) protein is 1-deoxy-D-xylulose-5-phosphate synthase.